A 219-amino-acid chain; its full sequence is Arginine transport system permease protein ArtQ (219 aa).

5 helical membrane passes run 19–39 (LAIT…LGIV), 51–73 (FIWI…QLMI), 88–108 (QFWA…SEII), 149–169 (AIVN…VIGL), and 187–207 (LEPL…LTFI). In terms of domain architecture, ABC transmembrane type-1 spans 19 to 208 (LAITLKIVVV…VLVLILTFIG (190 aa)).

The protein belongs to the binding-protein-dependent transport system permease family. HisMQ subfamily.

The protein resides in the cell membrane. In terms of biological role, part of a binding-protein-dependent transport system for arginine. Probably responsible for the translocation of the substrate across the membrane. The protein is Arginine transport system permease protein ArtQ (artQ) of Bacillus subtilis (strain 168).